Consider the following 229-residue polypeptide: Flavin-dependent thymidylate synthase (229 aa).

The region spanning Met-1–Phe-217 is the ThyX domain. FAD is bound by residues Thr-55, Arg-78 to Arg-80, and Glu-86. DUMP contacts are provided by residues Gln-75–Arg-78, Glu-86–Arg-90, and Arg-156. Positions Arg-78–Ser-88 match the ThyX motif motif. FAD contacts are provided by residues Asn-172–Arg-174 and Asn-178. Position 183 (Arg-183) interacts with dUMP. Arg-183 serves as the catalytic Involved in ionization of N3 of dUMP, leading to its activation.

The protein belongs to the thymidylate synthase ThyX family. In terms of assembly, homotetramer. Requires FAD as cofactor.

The enzyme catalyses dUMP + (6R)-5,10-methylene-5,6,7,8-tetrahydrofolate + NADPH + H(+) = dTMP + (6S)-5,6,7,8-tetrahydrofolate + NADP(+). It functions in the pathway pyrimidine metabolism; dTTP biosynthesis. Catalyzes the reductive methylation of 2'-deoxyuridine-5'-monophosphate (dUMP) to 2'-deoxythymidine-5'-monophosphate (dTMP) while utilizing 5,10-methylenetetrahydrofolate (mTHF) as the methyl donor, and NADPH and FADH(2) as the reductant. This is Flavin-dependent thymidylate synthase from Thermosipho melanesiensis (strain DSM 12029 / CIP 104789 / BI429).